Reading from the N-terminus, the 211-residue chain is Thymidylate kinase (211 aa).

Residue 11–18 (GPDGAGKT) coordinates ATP.

The protein belongs to the thymidylate kinase family.

It catalyses the reaction dTMP + ATP = dTDP + ADP. Functionally, phosphorylation of dTMP to form dTDP in both de novo and salvage pathways of dTTP synthesis. The sequence is that of Thymidylate kinase from Streptococcus uberis (strain ATCC BAA-854 / 0140J).